The sequence spans 210 residues: Na(+)-translocating NADH-quinone reductase subunit D (210 aa).

The next 6 membrane-spanning stretches (helical) occupy residues 11–31, 42–62, 70–90, 103–123, 131–151, and 178–198; these read ILAPVLDNNPIALQVLGVCSA, FVMTLAVMFVTAFSNLFVSLI, VRIIVQMAIIASLVIVVDQIL, VFVGLIITNCIVMGRAEAFAM, FIDGIGNGLGYGFVLITVGFF, and NGLMLLAPSAFFLIGFMIWAI.

Belongs to the NqrDE/RnfAE family. In terms of assembly, composed of six subunits; NqrA, NqrB, NqrC, NqrD, NqrE and NqrF.

It is found in the cell inner membrane. The catalysed reaction is a ubiquinone + n Na(+)(in) + NADH + H(+) = a ubiquinol + n Na(+)(out) + NAD(+). NQR complex catalyzes the reduction of ubiquinone-1 to ubiquinol by two successive reactions, coupled with the transport of Na(+) ions from the cytoplasm to the periplasm. NqrA to NqrE are probably involved in the second step, the conversion of ubisemiquinone to ubiquinol. The polypeptide is Na(+)-translocating NADH-quinone reductase subunit D (Vibrio anguillarum (Listonella anguillarum)).